A 248-amino-acid polypeptide reads, in one-letter code: Probable proteasome subunit alpha type-3 (248 aa).

The protein belongs to the peptidase T1A family. As to quaternary structure, the 26S proteasome consists of a 20S proteasome core and two 19S regulatory subunits. The 20S proteasome core is composed of 28 subunits that are arranged in four stacked rings, resulting in a barrel-shaped structure. The two end rings are each formed by seven alpha subunits, and the two central rings are each formed by seven beta subunits. The catalytic chamber with the active sites is on the inside of the barrel.

Its subcellular location is the cytoplasm. It localises to the nucleus. The proteasome is a multicatalytic proteinase complex which is characterized by its ability to cleave peptides with Arg, Phe, Tyr, Leu, and Glu adjacent to the leaving group at neutral or slightly basic pH. The proteasome has an ATP-dependent proteolytic activity. The sequence is that of Probable proteasome subunit alpha type-3 from Schizosaccharomyces pombe (strain 972 / ATCC 24843) (Fission yeast).